Reading from the N-terminus, the 159-residue chain is 17 kDa surface antigen (159 aa).

An N-terminal signal peptide occupies residues M1 to A19. Residue C20 is the site of N-palmitoyl cysteine attachment. Residue C20 is the site of S-diacylglycerol cysteine attachment.

The protein belongs to the rickettsiale 17 kDa surface antigen family.

It localises to the cell outer membrane. The chain is 17 kDa surface antigen (omp) from Rickettsia japonica (strain ATCC VR-1363 / YH).